The chain runs to 203 residues: Guanylate kinase (203 aa).

One can recognise a Guanylate kinase-like domain in the interval 5–184 (GMLIVLSGPS…AVQRIEKIIE (180 aa)). ATP is bound at residue 12-19 (GPSGVGKG).

This sequence belongs to the guanylate kinase family.

The protein resides in the cytoplasm. The enzyme catalyses GMP + ATP = GDP + ADP. In terms of biological role, essential for recycling GMP and indirectly, cGMP. In Latilactobacillus sakei subsp. sakei (strain 23K) (Lactobacillus sakei subsp. sakei), this protein is Guanylate kinase.